A 157-amino-acid polypeptide reads, in one-letter code: Small ribosomal subunit protein uS7 (157 aa).

It belongs to the universal ribosomal protein uS7 family. In terms of assembly, part of the 30S ribosomal subunit. Contacts proteins S9 and S11.

Functionally, one of the primary rRNA binding proteins, it binds directly to 16S rRNA where it nucleates assembly of the head domain of the 30S subunit. Is located at the subunit interface close to the decoding center, probably blocks exit of the E-site tRNA. This is Small ribosomal subunit protein uS7 from Chlamydia trachomatis serovar A (strain ATCC VR-571B / DSM 19440 / HAR-13).